Here is a 255-residue protein sequence, read N- to C-terminus: MLAKRIIPCLDVTDGRVVKGTNFINLRDAGDPVECARAYDAQQADELVFLDITASSDGRATMADVVRRTAACCFMPLTVGGGIRSVKDMREMLLAGADKVSLNTAAINRPELINEGAVAFGSQCIVVAIDAKRQASGKWGVSTHGGRKFVGLDAVEWAVEAERRGAGEILLTSMDADGAKTGYDIELTRAVSSAVRIPVIASGGAGNLDHMVDVLVEGKADAVLAASIFHFGEYTVPEAKAYFASRGIPVRPLAE.

Catalysis depends on residues Asp-11 and Asp-130.

Belongs to the HisA/HisF family. As to quaternary structure, heterodimer of HisH and HisF.

It is found in the cytoplasm. The enzyme catalyses 5-[(5-phospho-1-deoxy-D-ribulos-1-ylimino)methylamino]-1-(5-phospho-beta-D-ribosyl)imidazole-4-carboxamide + L-glutamine = D-erythro-1-(imidazol-4-yl)glycerol 3-phosphate + 5-amino-1-(5-phospho-beta-D-ribosyl)imidazole-4-carboxamide + L-glutamate + H(+). It participates in amino-acid biosynthesis; L-histidine biosynthesis; L-histidine from 5-phospho-alpha-D-ribose 1-diphosphate: step 5/9. In terms of biological role, IGPS catalyzes the conversion of PRFAR and glutamine to IGP, AICAR and glutamate. The HisF subunit catalyzes the cyclization activity that produces IGP and AICAR from PRFAR using the ammonia provided by the HisH subunit. This Akkermansia muciniphila (strain ATCC BAA-835 / DSM 22959 / JCM 33894 / BCRC 81048 / CCUG 64013 / CIP 107961 / Muc) protein is Imidazole glycerol phosphate synthase subunit HisF.